Here is a 468-residue protein sequence, read N- to C-terminus: 3-isopropylmalate dehydratase large subunit (468 aa).

Positions 349, 409, and 412 each coordinate [4Fe-4S] cluster.

Belongs to the aconitase/IPM isomerase family. LeuC type 1 subfamily. As to quaternary structure, heterodimer of LeuC and LeuD. It depends on [4Fe-4S] cluster as a cofactor.

It carries out the reaction (2R,3S)-3-isopropylmalate = (2S)-2-isopropylmalate. It functions in the pathway amino-acid biosynthesis; L-leucine biosynthesis; L-leucine from 3-methyl-2-oxobutanoate: step 2/4. Functionally, catalyzes the isomerization between 2-isopropylmalate and 3-isopropylmalate, via the formation of 2-isopropylmaleate. The chain is 3-isopropylmalate dehydratase large subunit from Ruegeria pomeroyi (strain ATCC 700808 / DSM 15171 / DSS-3) (Silicibacter pomeroyi).